We begin with the raw amino-acid sequence, 450 residues long: MSRLFGTDGVRGLANGLLTAELALSLAQAAAVVLGHDQLAEGKRPRAVIARDPRASGEFIGAAVEAGLASAGVDVYDAGVLPTPAAAYLIASLDADFGVMISASHNPAADNGIKFFARGGQKLADDAEDAIEAQLKVKPHRPTGVGVGRIQRFSDAEDRYILHLLTTLPHRLDGLTVVLDCAHGAASGCSPQVFKDAGAKVIVIGAEPDGLNINDGVGSTHLGPLQEAVVANGADLGIAHDGDADRCLAVDHEGNVIDGDQIMAILALALKADGKLKDNVLVATVMSNLGLKIALREAGISIRETAVGDRYVLEAMRQGGFNLGGEQSGHVIFADHATTGDGVLTGLQLAAQVARTRRSLQQLATAMTKLPQLMINVKGVDKTRAQTDEGVREAVARAEQELGQTGRVLLRPSGTEALVRVMVEAGDMATATRICEDLAEVIEKRLALAV.

The active-site Phosphoserine intermediate is serine 104. Mg(2+)-binding residues include serine 104, aspartate 241, aspartate 243, and aspartate 245. Serine 104 carries the post-translational modification Phosphoserine.

It belongs to the phosphohexose mutase family. Mg(2+) serves as cofactor. Activated by phosphorylation.

The enzyme catalyses alpha-D-glucosamine 1-phosphate = D-glucosamine 6-phosphate. Functionally, catalyzes the conversion of glucosamine-6-phosphate to glucosamine-1-phosphate. This is Phosphoglucosamine mutase from Renibacterium salmoninarum (strain ATCC 33209 / DSM 20767 / JCM 11484 / NBRC 15589 / NCIMB 2235).